The following is a 288-amino-acid chain: Pantothenate synthetase (288 aa).

35–42 (MGALHDGH) provides a ligand contact to ATP. Histidine 42 serves as the catalytic Proton donor. Glutamine 66 is a (R)-pantoate binding site. Glutamine 66 contacts beta-alanine. Residue 152-155 (GEKD) participates in ATP binding. Glutamine 158 contributes to the (R)-pantoate binding site. ATP contacts are provided by residues glycine 181 and 189–192 (LSSR).

This sequence belongs to the pantothenate synthetase family. Homodimer.

It is found in the cytoplasm. It carries out the reaction (R)-pantoate + beta-alanine + ATP = (R)-pantothenate + AMP + diphosphate + H(+). It participates in cofactor biosynthesis; (R)-pantothenate biosynthesis; (R)-pantothenate from (R)-pantoate and beta-alanine: step 1/1. In terms of biological role, catalyzes the condensation of pantoate with beta-alanine in an ATP-dependent reaction via a pantoyl-adenylate intermediate. The chain is Pantothenate synthetase from Maricaulis maris (strain MCS10) (Caulobacter maris).